The primary structure comprises 177 residues: Secretion monitor (177 aa).

A signal peptide spans 1 to 30; it reads MIGILNRWRQFGRRYFWPHLLLGMVAASLG.

The protein belongs to the SecM family.

Its subcellular location is the cytoplasm. It is found in the cytosol. The protein localises to the periplasm. Its function is as follows. Regulates secA expression by translational coupling of the secM secA operon. Translational pausing at a specific Pro residue 5 residues before the end of the protein may allow disruption of a mRNA repressor helix that normally suppresses secA translation initiation. This chain is Secretion monitor, found in Yersinia enterocolitica serotype O:8 / biotype 1B (strain NCTC 13174 / 8081).